A 429-amino-acid polypeptide reads, in one-letter code: Adenylosuccinate synthetase (429 aa).

GTP contacts are provided by residues 12-18 (GDEGKGK) and 40-42 (GHT). Residue Asp13 is the Proton acceptor of the active site. 2 residues coordinate Mg(2+): Asp13 and Gly40. IMP is bound by residues 13–16 (DEGK), 38–41 (NAGH), Thr129, Arg143, Gln223, Thr238, and Arg302. His41 functions as the Proton donor in the catalytic mechanism. Residue 298-304 (TVTGRPR) participates in substrate binding. GTP is bound by residues Arg304, 330–332 (KLD), and 412–414 (STS).

Belongs to the adenylosuccinate synthetase family. As to quaternary structure, homodimer. Requires Mg(2+) as cofactor.

The protein resides in the cytoplasm. It catalyses the reaction IMP + L-aspartate + GTP = N(6)-(1,2-dicarboxyethyl)-AMP + GDP + phosphate + 2 H(+). It participates in purine metabolism; AMP biosynthesis via de novo pathway; AMP from IMP: step 1/2. Functionally, plays an important role in the de novo pathway of purine nucleotide biosynthesis. Catalyzes the first committed step in the biosynthesis of AMP from IMP. This Gluconobacter oxydans (strain 621H) (Gluconobacter suboxydans) protein is Adenylosuccinate synthetase.